Reading from the N-terminus, the 175-residue chain is RNA pyrophosphohydrolase (175 aa).

The 144-residue stretch at 7–150 (GYRLNVGIIL…KRQVYIQALK (144 aa)) folds into the Nudix hydrolase domain. Residues 39-60 (GGLAPGETAMQAMYRELHEEVG) carry the Nudix box motif.

It belongs to the Nudix hydrolase family. RppH subfamily. It depends on a divalent metal cation as a cofactor.

Functionally, accelerates the degradation of transcripts by removing pyrophosphate from the 5'-end of triphosphorylated RNA, leading to a more labile monophosphorylated state that can stimulate subsequent ribonuclease cleavage. This chain is RNA pyrophosphohydrolase, found in Legionella pneumophila (strain Paris).